Reading from the N-terminus, the 331-residue chain is Induced myeloid leukemia cell differentiation protein Mcl-1 homolog (331 aa).

The interval 85–156 (LAVPPEEMAA…PPEEEEDDLY (72 aa)) is PEST-like. Ser-102 is modified (phosphoserine). Lys-117 is covalently cross-linked (Glycyl lysine isopeptide (Lys-Gly) (interchain with G-Cter in ubiquitin)). Residues 130-154 (EAAKSSGADGSLPSTPPPPEEEEDD) are disordered. Phosphoserine; by GSK3-alpha and GSK3-beta is present on Ser-140. The residue at position 143 (Ser-143) is a Phosphoserine. At Thr-144 the chain carries Phosphothreonine; by MAPK. Glycyl lysine isopeptide (Lys-Gly) (interchain with G-Cter in ubiquitin) cross-links involve residues Lys-175 and Lys-178. Positions 190 to 204 (ALETLRRVGDGVQRN) match the BH3 motif. The BH1 motif lies at 234–253 (VFKDGVTNWGRIVTLISFGA). A BH2 motif is present at residues 285–300 (DWLVKQRGWDGFVEFF). The chain crosses the membrane as a helical span at residues 308–330 (GIRNVLLAFAGVAGVGAGLAYLI).

It belongs to the Bcl-2 family. As to quaternary structure, interacts with HIF3A isoform 2 (via C-terminus domain). Interacts with BAD, BOK, BIK, BAX, BAK1, and TPT1. Interacts with BBC3, BMF and PMAIP1. Interacts with BOP. Interacts with BCL2L11; this interaction may sequester BCL2L11 and prevent its pro-apoptotic activity. Interacts with GIMAP5 and HSPA8/HSC70; the interaction between HSPA8 and MCL1 is impaired in the absence of GIMAP5. In terms of processing, cleaved by CASP3 during apoptosis, yielding a pro-apoptotic C-terminal fragment. Rapidly degraded in the absence of phosphorylation in the PEST region. Post-translationally, phosphorylated on Ser-140, by GSK3, in response to IL3/interleukin-3 withdrawal. Phosphorylation at Ser-140 induces ubiquitination and proteasomal degradation, abrogating the anti-apoptotic activity. Treatment with taxol or okadaic acid induces phosphorylation on additional sites. In terms of processing, ubiquitinated. Ubiquitination is induced by phosphorylation at Ser-140. Deubiquitinated by USP20; leading to increased stability.

It is found in the membrane. It localises to the cytoplasm. Its subcellular location is the mitochondrion. The protein resides in the nucleus. The protein localises to the nucleoplasm. Functionally, involved in the regulation of apoptosis versus cell survival, and in the maintenance of viability but not of proliferation. Mediates its effects by interactions with a number of other regulators of apoptosis. Isoform 2 has antiapoptotic activity. In Mus musculus (Mouse), this protein is Induced myeloid leukemia cell differentiation protein Mcl-1 homolog (Mcl1).